A 508-amino-acid polypeptide reads, in one-letter code: Transposase (508 aa).

In terms of domain architecture, HTH IS21-type spans leucine 3–leucine 65. The 176-residue stretch at leucine 124–valine 299 folds into the Integrase catalytic domain.

The protein belongs to the transposase IS21/IS408/IS1162 family.

Functionally, required for the transposition of the insertion element. The polypeptide is Transposase (nmoT) (Aminobacter aminovorans (Chelatobacter heintzii)).